A 474-amino-acid polypeptide reads, in one-letter code: 3-isopropylmalate dehydratase large subunit (474 aa).

[4Fe-4S] cluster-binding residues include cysteine 353, cysteine 414, and cysteine 417.

Belongs to the aconitase/IPM isomerase family. LeuC type 1 subfamily. Heterodimer of LeuC and LeuD. [4Fe-4S] cluster is required as a cofactor.

The catalysed reaction is (2R,3S)-3-isopropylmalate = (2S)-2-isopropylmalate. It functions in the pathway amino-acid biosynthesis; L-leucine biosynthesis; L-leucine from 3-methyl-2-oxobutanoate: step 2/4. Catalyzes the isomerization between 2-isopropylmalate and 3-isopropylmalate, via the formation of 2-isopropylmaleate. The protein is 3-isopropylmalate dehydratase large subunit of Xylella fastidiosa (strain 9a5c).